Reading from the N-terminus, the 440-residue chain is Serine hydroxymethyltransferase (440 aa).

(6S)-5,6,7,8-tetrahydrofolate-binding positions include L119 and 123–125; that span reads GHL. K228 carries the N6-(pyridoxal phosphate)lysine modification. 370-372 contributes to the (6S)-5,6,7,8-tetrahydrofolate binding site; it reads SPF.

Belongs to the SHMT family. As to quaternary structure, homodimer. Requires pyridoxal 5'-phosphate as cofactor.

The protein localises to the cytoplasm. The catalysed reaction is (6R)-5,10-methylene-5,6,7,8-tetrahydrofolate + glycine + H2O = (6S)-5,6,7,8-tetrahydrofolate + L-serine. The protein operates within one-carbon metabolism; tetrahydrofolate interconversion. It functions in the pathway amino-acid biosynthesis; glycine biosynthesis; glycine from L-serine: step 1/1. Its function is as follows. Catalyzes the reversible interconversion of serine and glycine with tetrahydrofolate (THF) serving as the one-carbon carrier. This reaction serves as the major source of one-carbon groups required for the biosynthesis of purines, thymidylate, methionine, and other important biomolecules. Also exhibits THF-independent aldolase activity toward beta-hydroxyamino acids, producing glycine and aldehydes, via a retro-aldol mechanism. This chain is Serine hydroxymethyltransferase, found in Chlorobaculum parvum (strain DSM 263 / NCIMB 8327) (Chlorobium vibrioforme subsp. thiosulfatophilum).